Consider the following 151-residue polypeptide: Small ribosomal subunit protein uS15 (151 aa).

A Phosphoserine modification is found at S32. Residues K39 and K43 each participate in a glycyl lysine isopeptide (Lys-Gly) (interchain with G-Cter in ubiquitin) cross-link.

The protein belongs to the universal ribosomal protein uS15 family. As to quaternary structure, component of the small ribosomal subunit (SSU). Mature yeast ribosomes consist of a small (40S) and a large (60S) subunit. The 40S small subunit contains 1 molecule of ribosomal RNA (18S rRNA) and 33 different proteins (encoded by 57 genes). The large 60S subunit contains 3 rRNA molecules (25S, 5.8S and 5S rRNA) and 46 different proteins (encoded by 81 genes).

It localises to the cytoplasm. Its function is as follows. Component of the ribosome, a large ribonucleoprotein complex responsible for the synthesis of proteins in the cell. The small ribosomal subunit (SSU) binds messenger RNAs (mRNAs) and translates the encoded message by selecting cognate aminoacyl-transfer RNA (tRNA) molecules. The large subunit (LSU) contains the ribosomal catalytic site termed the peptidyl transferase center (PTC), which catalyzes the formation of peptide bonds, thereby polymerizing the amino acids delivered by tRNAs into a polypeptide chain. The nascent polypeptides leave the ribosome through a tunnel in the LSU and interact with protein factors that function in enzymatic processing, targeting, and the membrane insertion of nascent chains at the exit of the ribosomal tunnel. In Saccharomyces cerevisiae (strain ATCC 204508 / S288c) (Baker's yeast), this protein is Small ribosomal subunit protein uS15.